A 114-amino-acid polypeptide reads, in one-letter code: Adapter SH3BGRL (114 aa).

The tract at residues 13–50 (SMAIKKKQQDVLGFLEANKIGFEEKDIAANEENRKWMR) is required for interaction with HER2. A required for interaction with PFN1, HER2, and ATG12 region spans residues 54–71 (PENSRPATGYPLPPQIFN). Residues 61 to 67 (TGYPLPP) carry the SH3-binding motif.

It belongs to the SH3BGR family. As to quaternary structure, monomer. Interacts with PFN1/Profilin-1. Interacts with ERBB2. Interacts with ATG12. Interacts with BECN1. Interacts with translating ribosomes.

It is found in the cytoplasm. The protein resides in the cytosol. The protein localises to the cell membrane. Its function is as follows. Appears to function as an adapter protein that bridges proteins together or proteins with mRNAs. May function as a ubiquitin ligase-substrate adapter. Additionally, associates with translating cytoplasmic ribosomes and may promote the expression of specific mRNAs. The protein is Adapter SH3BGRL (SH3BGRL) of Bos taurus (Bovine).